We begin with the raw amino-acid sequence, 227 residues long: uncharacterized protein (227 aa).

The next 7 membrane-spanning stretches (helical) occupy residues 15-34, 55-77, 92-114, 121-140, 145-167, 180-202, and 206-224; these read FIAA…FLIY, TFLF…ASGV, AFSM…YSLL, FPGE…TSLL, LVFL…VNYS, PLYI…FLPL, and FAIY…YRVL.

The protein resides in the cell membrane. This is an uncharacterized protein from Archaeoglobus fulgidus (strain ATCC 49558 / DSM 4304 / JCM 9628 / NBRC 100126 / VC-16).